A 258-amino-acid polypeptide reads, in one-letter code: UPF0246 protein YaaA (258 aa).

The protein belongs to the UPF0246 family.

This Escherichia coli O6:K15:H31 (strain 536 / UPEC) protein is UPF0246 protein YaaA.